Here is a 196-residue protein sequence, read N- to C-terminus: Alpha-crystallin A chain (196 aa).

Met-1 carries the N-acetylmethionine modification. The tract at residues 1–63 (MDVTIQHPWF…RTVLDSCISE (63 aa)) is required for complex formation with BFSP1 and BFSP2. Deamidated glutamine; partial is present on Gln-6. Position 45 is a phosphoserine (Ser-45). Gln-50 carries the post-translational modification Deamidated glutamine; partial. The sHSP domain maps to 76–185 (HAGNPENNPI…GHSERAIPVS (110 aa)). An N6-acetyllysine mark is found at Lys-93 and Lys-122. Residue His-123 coordinates Zn(2+). Deamidated asparagine; partial is present on Asn-124. Zn(2+)-binding residues include Glu-125 and His-130. Ser-145 bears the Phosphoserine mark. Position 170 is a deamidated glutamine; partial (Gln-170). The segment at 170–196 (QSGLDAGHSERAIPVSQEEKPSSAPLF) is disordered. Basic and acidic residues predominate over residues 176–190 (GHSERAIPVSQEEKP). A Zn(2+)-binding site is contributed by His-177. A glycan (O-linked (GlcNAc) serine) is linked at Ser-185.

It belongs to the small heat shock protein (HSP20) family. Heteromer composed of three CRYAA and one CRYAB subunits. Inter-subunit bridging via zinc ions enhances stability, which is crucial as there is no protein turn over in the lens. Can also form homodimers and homotetramers (dimers of dimers) which serve as the building blocks of homooligomers. Within homooligomers, the zinc-binding motif is created from residues of 3 different molecules. His-123 and Glu-125 from one molecule are ligands of the zinc ion, and His-130 and His-177 residues from additional molecules complete the site with tetrahedral coordination geometry. Part of a complex required for lens intermediate filament formation composed of BFSP1, BFSP2 and CRYAA. Post-translationally, acetylation at Lys-93 may increase chaperone activity. In terms of processing, undergoes age-dependent proteolytical cleavage at the C-terminus.

The protein localises to the cytoplasm. The protein resides in the nucleus. Contributes to the transparency and refractive index of the lens. Acts as a chaperone, preventing aggregation of various proteins under a wide range of stress conditions. Required for the correct formation of lens intermediate filaments as part of a complex composed of BFSP1, BFSP2 and CRYAA. This Spalax ehrenbergi (Middle East blind mole rat) protein is Alpha-crystallin A chain (CRYAA).